The primary structure comprises 1055 residues: Kinesin-like protein KIN-7D, mitochondrial (1055 aa).

Positions 1-23 (MASSSSRTRSSRPPSPASSTSSS) are enriched in low complexity. Residues 1-36 (MASSSSRTRSSRPPSPASSTSSSHLSNRLIPRSNST) form a disordered region. A mitochondrion-targeting transit peptide spans 1-96 (MASSSSRTRS…PMDDTISSER (96 aa)). Positions 98-415 (SISVTVRFRP…LKFASRAKSI (318 aa)) constitute a Kinesin motor domain. An ATP-binding site is contributed by 178 to 185 (GVTSSGKT). 3 coiled-coil regions span residues 419-503 (ASRN…ILVS), 618-653 (PENS…GEAS), and 694-823 (LQEK…LAQT). The disordered stretch occupies residues 826-856 (PMNGVNRKYNDGARSGRKGRISSSRSSGDEF). A coiled-coil region spans residues 880–911 (LESALAEKEFIEDEYRKKAEEAKRREEALEND). Residues 926–963 (NGALPEPNGTDPGRELEKSQSHAVLKERQVSSAPRQPE) form a disordered region. Residues 937 to 954 (PGRELEKSQSHAVLKERQ) are compositionally biased toward basic and acidic residues. The RING-type zinc-finger motif lies at 1008–1043 (CKVCFESPTAAILLPCRHFCLCKSCSLACSECPICR).

The protein belongs to the TRAFAC class myosin-kinesin ATPase superfamily. Kinesin family. KIN-7 subfamily.

It localises to the mitochondrion. This Arabidopsis thaliana (Mouse-ear cress) protein is Kinesin-like protein KIN-7D, mitochondrial.